Consider the following 507-residue polypeptide: Putative pentatricopeptide repeat-containing protein At3g16710, mitochondrial (507 aa).

Residues 1–48 (MRRSIATGFASIVKGFHLHSHRHRLQISNPRTAASLSLCGFCFWIRAF) constitute a mitochondrion transit peptide. 13 PPR repeats span residues 47 to 81 (AFSS…RPLP), 82 to 116 (SIID…GIPP), 117 to 151 (LLCT…GFEP), 152 to 186 (DLVT…GFKP), 187 to 221 (NVVT…GSRP), 222 to 256 (NVVT…RIEP), 257 to 291 (NVIT…SVYP), 292 to 326 (DVFT…GCYP), 327 to 361 (NEVI…GVVA), 362 to 396 (NTIT…RAPP), 397 to 431 (DIRT…EMDI), 432 to 466 (NIVT…GMKP), and 467 to 501 (NVIT…GFLP).

Belongs to the PPR family. P subfamily.

It is found in the mitochondrion. The polypeptide is Putative pentatricopeptide repeat-containing protein At3g16710, mitochondrial (Arabidopsis thaliana (Mouse-ear cress)).